A 142-amino-acid chain; its full sequence is Hemoglobin subunit alpha-C (142 aa).

At alanine 2 the chain carries N-acetylalanine. The 141-residue stretch at 2-142 (ALNCDDKAHI…VSGLLTSKYR (141 aa)) folds into the Globin domain. Residue histidine 59 participates in O2 binding. Histidine 88 provides a ligand contact to heme b.

It belongs to the globin family. In terms of assembly, heterotetramer of either two alpha-B chains or two alpha-C chains and two beta chains. The two major hemoglobins, B and C, associate upon deoxygenation to form a trimer of tetramers, BC2, that has a much lower affinity for oxygen than either component alone. Red blood cells.

Functionally, the alpha-C chain is a component of adult hemoglobin C. The sequence is that of Hemoglobin subunit alpha-C from Aquarana catesbeiana (American bullfrog).